The chain runs to 267 residues: Small ribosomal subunit protein uS2 (267 aa).

The interval 234 to 267 (DNAEEELAEAISQEEPSAAEELPDDMADNENEFE) is disordered. The segment covering 250-267 (SAAEELPDDMADNENEFE) has biased composition (acidic residues).

This sequence belongs to the universal ribosomal protein uS2 family.

The chain is Small ribosomal subunit protein uS2 from Dichelobacter nodosus (strain VCS1703A).